The following is a 350-amino-acid chain: Outer membrane protein A (350 aa).

Positions 1 to 21 (MKKTAIAIAVALAGFATVAQA) are cleaved as a signal peptide. 8 consecutive transmembrane segments (beta stranded) span residues 27–37 (TWYAGGKLGWS), 59–70 (QLGAGAFGGYQV), 74–82 (LGFEMGYDW), 100–111 (QAVQLTAKLGYP), 116–124 (LDIYTRLGG), 146–155 (PVFAGGVEWA), 160–167 (IATRLEYQ), and 186–194 (MLSVGVSYR). Repeat copies occupy residues 205-206 (AP), 207-208 (AP), 209-210 (AP), and 211-212 (AP). The segment at 205–212 (APAPAPAP) is 4 X 2 AA tandem repeats of A-P. Positions 214–342 (VTTKTFTLKS…RVAIEVKGYK (129 aa)) constitute an OmpA-like domain. Cys-315 and Cys-327 are disulfide-bonded.

Belongs to the outer membrane OOP (TC 1.B.6) superfamily. OmpA family. In terms of assembly, monomer and homodimer.

It localises to the cell outer membrane. Its function is as follows. With TolR probably plays a role in maintaining the position of the peptidoglycan cell wall in the periplasm. Acts as a porin with low permeability that allows slow penetration of small solutes; an internal gate slows down solute passage. Required for conjugation with F-type plasmids; probably serves as the mating receptor on recipient cells. This is Outer membrane protein A from Klebsiella aerogenes (Enterobacter aerogenes).